We begin with the raw amino-acid sequence, 142 residues long: Large ribosomal subunit protein uL13 (142 aa).

Belongs to the universal ribosomal protein uL13 family. As to quaternary structure, part of the 50S ribosomal subunit.

Functionally, this protein is one of the early assembly proteins of the 50S ribosomal subunit, although it is not seen to bind rRNA by itself. It is important during the early stages of 50S assembly. The chain is Large ribosomal subunit protein uL13 from Serratia proteamaculans (strain 568).